The primary structure comprises 907 residues: Leucine--tRNA ligase (907 aa).

The 'HIGH' region motif lies at 42 to 52; the sequence is PYPSGKLHMGH. The 'KMSKS' region signature appears at 651–655; sequence TMSKS. Lys-654 contributes to the ATP binding site.

Belongs to the class-I aminoacyl-tRNA synthetase family.

The protein resides in the cytoplasm. It catalyses the reaction tRNA(Leu) + L-leucine + ATP = L-leucyl-tRNA(Leu) + AMP + diphosphate. The polypeptide is Leucine--tRNA ligase (Verminephrobacter eiseniae (strain EF01-2)).